The sequence spans 136 residues: Large ribosomal subunit protein uL16 (136 aa).

Belongs to the universal ribosomal protein uL16 family. In terms of assembly, part of the 50S ribosomal subunit.

Binds 23S rRNA and is also seen to make contacts with the A and possibly P site tRNAs. This is Large ribosomal subunit protein uL16 from Ehrlichia chaffeensis (strain ATCC CRL-10679 / Arkansas).